Here is a 557-residue protein sequence, read N- to C-terminus: Potassium-transporting ATPase potassium-binding subunit (557 aa).

Helical transmembrane passes span glycine 5–serine 25, leucine 63–glycine 83, glycine 132–isoleucine 152, leucine 170–isoleucine 190, phenylalanine 253–valine 273, leucine 283–valine 303, valine 329–alanine 349, alanine 356–valine 376, glycine 379–glycine 399, leucine 416–methionine 436, leucine 484–alanine 504, and leucine 526–alanine 546.

This sequence belongs to the KdpA family. As to quaternary structure, the system is composed of three essential subunits: KdpA, KdpB and KdpC.

It is found in the cell inner membrane. Its function is as follows. Part of the high-affinity ATP-driven potassium transport (or Kdp) system, which catalyzes the hydrolysis of ATP coupled with the electrogenic transport of potassium into the cytoplasm. This subunit binds the periplasmic potassium ions and delivers the ions to the membrane domain of KdpB through an intramembrane tunnel. The sequence is that of Potassium-transporting ATPase potassium-binding subunit from Escherichia coli (strain UTI89 / UPEC).